Here is a 466-residue protein sequence, read N- to C-terminus: Adenosylhomocysteinase (466 aa).

Thr57, Asp132, and Glu192 together coordinate substrate. 193-195 (TTT) serves as a coordination point for NAD(+). Residues Lys222 and Asp226 each coordinate substrate. Residues Asn227, 256–261 (GYGDVG), Glu279, Asn314, 335–337 (IGH), and Asn380 contribute to the NAD(+) site.

It belongs to the adenosylhomocysteinase family. Requires NAD(+) as cofactor.

It localises to the cytoplasm. The enzyme catalyses S-adenosyl-L-homocysteine + H2O = L-homocysteine + adenosine. It participates in amino-acid biosynthesis; L-homocysteine biosynthesis; L-homocysteine from S-adenosyl-L-homocysteine: step 1/1. Its function is as follows. May play a key role in the regulation of the intracellular concentration of adenosylhomocysteine. The chain is Adenosylhomocysteinase from Mesorhizobium japonicum (strain LMG 29417 / CECT 9101 / MAFF 303099) (Mesorhizobium loti (strain MAFF 303099)).